An 80-amino-acid polypeptide reads, in one-letter code: UPF0154 protein SaurJH1_1431 (80 aa).

Residues Trp-4 to Leu-24 traverse the membrane as a helical segment.

This sequence belongs to the UPF0154 family.

The protein localises to the cell membrane. In Staphylococcus aureus (strain JH1), this protein is UPF0154 protein SaurJH1_1431.